An 886-amino-acid polypeptide reads, in one-letter code: Adhesion G protein-coupled receptor E1 (886 aa).

Residues 1–20 form the signal peptide; it reads MRGFNLLLFWGCCVMHSWEG. Topologically, residues 21–599 are extracellular; it reads HIRPTRKPNT…IMASGELTMD (579 aa). Positions 31–79 constitute an EGF-like 1 domain; sequence KGNNCRDSTLCPAYATCTNTVDSYYCACKQGFLSSNGQNHFKDPGVRCK. Disulfide bonds link cysteine 35/cysteine 47, cysteine 41/cysteine 56, cysteine 58/cysteine 78, cysteine 84/cysteine 97, cysteine 91/cysteine 106, cysteine 108/cysteine 130, cysteine 136/cysteine 148, cysteine 142/cysteine 157, cysteine 159/cysteine 170, cysteine 176/cysteine 188, cysteine 182/cysteine 197, cysteine 199/cysteine 219, cysteine 225/cysteine 235, cysteine 229/cysteine 244, cysteine 246/cysteine 266, cysteine 272/cysteine 285, cysteine 279/cysteine 294, and cysteine 296/cysteine 315. The EGF-like 2; calcium-binding domain maps to 80–131; it reads DIDECSQSPQPCGPNSSCKNLSGRYKCSCLDGFSSPTGNDWVPGKPGNFSCT. N-linked (GlcNAc...) asparagine glycans are attached at residues asparagine 94, asparagine 99, and asparagine 127. The 40-residue stretch at 132-171 folds into the EGF-like 3; calcium-binding domain; the sequence is DINECLTSSVCPEHSDCVNSMGSYSCSCQVGFISRNSTCE. Residue asparagine 167 is glycosylated (N-linked (GlcNAc...) asparagine). The EGF-like 4; calcium-binding domain occupies 172-220; sequence DVDECADPRACPEHATCNNTVGNYSCFCNPGFESSSGHLSFQGLKASCE. 2 N-linked (GlcNAc...) asparagine glycosylation sites follow: asparagine 189 and asparagine 194. An EGF-like 5; calcium-binding domain is found at 221-267; the sequence is DIDECTEMCPINSTCTNTPGSYFCTCHPGFAPSNGQLNFTDQGVECR. N-linked (GlcNAc...) asparagine glycans are attached at residues asparagine 232 and asparagine 258. In terms of domain architecture, EGF-like 6; calcium-binding spans 268 to 316; it reads DIDECRQDPSTCGPNSICTNALGSYSCGCIAGFHPNPEGSQKDGNFSCQ. N-linked (GlcNAc...) asparagine glycans are attached at residues asparagine 312, asparagine 366, asparagine 375, and asparagine 448. Residues 431 to 597 enclose the GAIN-B domain; that stretch reads EYLDIESKVI…AVIMASGELT (167 aa). Intrachain disulfides connect cysteine 550–cysteine 579 and cysteine 567–cysteine 581. Positions 550–597 are GPS; that stretch reads CVSWSTDVKGGRWTSFGCVILEASETYTICSCNQMANLAVIMASGELT. The helical transmembrane segment at 600-627 threads the bilayer; that stretch reads FSLYIISHVGIIISLVCLVLAIATFLLC. Over 628–634 the chain is Cytoplasmic; it reads RSIRNHN. A helical membrane pass occupies residues 635–656; the sequence is TYLHLHLCVCLLLAKTLFLAGI. Over 657-666 the chain is Extracellular; the sequence is HKTDNKMGCA. Residues 667-690 form a helical membrane-spanning segment; it reads IIAGFLHYLFLACFFWMLVEAVIL. Residues 691-709 lie on the Cytoplasmic side of the membrane; sequence FLMVRNLKVVNYFSSRNIK. A helical transmembrane segment spans residues 710 to 731; the sequence is MLHICAFGYGLPMLVVVISASV. At 732 to 747 the chain is on the extracellular side; the sequence is QPQGYGMHNRCWLNTE. A helical membrane pass occupies residues 748 to 776; it reads TGFIWSFLGPVCTVIVINSLLLTWTLWIL. At 777–794 the chain is on the cytoplasmic side; that stretch reads RQRLSSVNAEVSTLKDTR. A helical membrane pass occupies residues 795-814; that stretch reads LLTFKAFAQLFILGCSWVLG. Residues 815-829 are Extracellular-facing; that stretch reads IFQIGPVAGVMAYLF. The chain crosses the membrane as a helical span at residues 830–852; it reads TIINSLQGAFIFLIHCLLNGQVR. The Cytoplasmic portion of the chain corresponds to 853–886; it reads EEYKRWITGKTKPSSQSQTSRILLSSMPSASKTG. Positions 862–886 are disordered; it reads KTKPSSQSQTSRILLSSMPSASKTG. Residues 863-886 are compositionally biased toward polar residues; sequence TKPSSQSQTSRILLSSMPSASKTG.

It belongs to the G-protein coupled receptor 2 family. Adhesion G-protein coupled receptor (ADGR) subfamily. In terms of tissue distribution, expression is restricted to eosinophils.

The protein localises to the cell membrane. Orphan receptor involved in cell adhesion and probably in cell-cell interactions specifically involving cells of the immune system. May play a role in regulatory T-cells (Treg) development. The sequence is that of Adhesion G protein-coupled receptor E1 from Homo sapiens (Human).